The following is a 194-amino-acid chain: NADH-quinone oxidoreductase subunit B 1 (194 aa).

[4Fe-4S] cluster is bound by residues Cys-73, Cys-74, Cys-138, and Cys-168.

It belongs to the complex I 20 kDa subunit family. As to quaternary structure, NDH-1 is composed of 14 different subunits. Subunits NuoB, C, D, E, F, and G constitute the peripheral sector of the complex. [4Fe-4S] cluster is required as a cofactor.

It is found in the cell inner membrane. It carries out the reaction a quinone + NADH + 5 H(+)(in) = a quinol + NAD(+) + 4 H(+)(out). NDH-1 shuttles electrons from NADH, via FMN and iron-sulfur (Fe-S) centers, to quinones in the respiratory chain. The immediate electron acceptor for the enzyme in this species is believed to be ubiquinone. Couples the redox reaction to proton translocation (for every two electrons transferred, four hydrogen ions are translocated across the cytoplasmic membrane), and thus conserves the redox energy in a proton gradient. The protein is NADH-quinone oxidoreductase subunit B 1 of Rhizobium etli (strain CIAT 652).